We begin with the raw amino-acid sequence, 1049 residues long: RTX-III toxin determinant A from serotype 2 (1049 aa).

Transmembrane regions (helical) follow at residues Thr154–Ile170, Ala315–Leu331, and Leu397–Ile413. 6 Hemolysin-type calcium-binding repeats span residues Lys743 to Leu760, Asn761 to Leu778, Arg779 to Leu796, Leu797 to Leu814, Arg825 to Leu842, and Asp843 to Tyr860.

It belongs to the RTX prokaryotic toxin (TC 1.C.11) family. In terms of processing, palmitoylated by ApxIIIC. The toxin only becomes active when modified.

Its subcellular location is the secreted. It localises to the host cell membrane. In terms of biological role, does not have hemolytic activity but shows a strong cytotoxicity towards alveolar macrophages and neutrophils. This is RTX-III toxin determinant A from serotype 2 (apxIIIA) from Actinobacillus pleuropneumoniae (Haemophilus pleuropneumoniae).